We begin with the raw amino-acid sequence, 638 residues long: Golgin subfamily A member 8S (638 aa).

The span at 1–11 (MWPQARLPPHP) shows a compositional bias: pro residues. Residues 1 to 84 (MWPQARLPPH…GESPTSSATL (84 aa)) are disordered. Positions 50–62 (TNGSIHETATSGG) are enriched in polar residues. 3 coiled-coil regions span residues 105–160 (VSQL…LNTD), 223–275 (LEQS…MSQE), and 318–417 (EAEL…QQKQ). 3 disordered regions span residues 427–453 (ALPG…PSIP), 510–532 (KDAA…DEAA), and 556–575 (AHNP…ELGA). Basic and acidic residues predominate over residues 434–446 (GGGHLDSEGEEAP). Residues 514–525 (LGGGHHQAGAQG) show a composition bias toward gly residues. A compositionally biased stretch (low complexity) spans 561-574 (DEPGPGAPAPQELG).

It belongs to the GOLGA8 family.

The chain is Golgin subfamily A member 8S from Homo sapiens (Human).